A 333-amino-acid chain; its full sequence is Fructose-1,6-bisphosphatase class 1 (333 aa).

Mg(2+)-binding residues include E90, D112, L114, and D115. Substrate is bound by residues 115–118 (DGSS), N207, and K273. Position 279 (E279) interacts with Mg(2+).

Belongs to the FBPase class 1 family. In terms of assembly, homotetramer. Requires Mg(2+) as cofactor.

It is found in the cytoplasm. It carries out the reaction beta-D-fructose 1,6-bisphosphate + H2O = beta-D-fructose 6-phosphate + phosphate. Its pathway is carbohydrate biosynthesis; gluconeogenesis. This chain is Fructose-1,6-bisphosphatase class 1, found in Aromatoleum aromaticum (strain DSM 19018 / LMG 30748 / EbN1) (Azoarcus sp. (strain EbN1)).